Reading from the N-terminus, the 344-residue chain is Arginine N-succinyltransferase (344 aa).

Residue Leu125 coordinates succinyl-CoA. The Proton donor role is filled by His229.

Belongs to the arginine N-succinyltransferase family.

It carries out the reaction succinyl-CoA + L-arginine = N(2)-succinyl-L-arginine + CoA + H(+). It participates in amino-acid degradation; L-arginine degradation via AST pathway; L-glutamate and succinate from L-arginine: step 1/5. Its function is as follows. Catalyzes the transfer of succinyl-CoA to arginine to produce N(2)-succinylarginine. This Shigella dysenteriae serotype 1 (strain Sd197) protein is Arginine N-succinyltransferase.